A 381-amino-acid chain; its full sequence is NF-kappa-B inhibitor-like protein 1 (381 aa).

The segment at 1 to 32 (MSNPSPQAPEEEASTSVCRPQSSMASVSRRHR) is disordered. The span at 14 to 26 (STSVCRPQSSMAS) shows a compositional bias: polar residues. ANK repeat units follow at residues 64 to 93 (GQPPPLHRACARHDAPALCLLLRLGADPAH) and 97 to 133 (HGDTALHAAARQGPNAYTDFFLPLLSRCPSAMGIKNK). Disordered regions lie at residues 129-166 (GIKNKDGETPGQILGWGPPWDSAEEEEDEEVSKEREWR), 186-242 (DDAS…QEEE), and 257-294 (LCESRARRAQEAQGDRGPAPPRARPRAEHPRGAGRGSL). Ser-150 carries the phosphoserine modification. Acidic residues predominate over residues 150-159 (SAEEEEDEEV). Basic and acidic residues-rich tracts occupy residues 204–228 (RLAREHAQKQRRQQLEAEGSRRPPR) and 257–270 (LCESRARRAQEAQG).

As to quaternary structure, interacts with CACTIN (via N-terminal domain); the interaction occurs in a pro-inflammatory-independent manner.

It is found in the nucleus. Its function is as follows. Involved in the regulation of innate immune response. Acts as negative regulator of Toll-like receptor and interferon-regulatory factor (IRF) signaling pathways. Contributes to the negative regulation of transcriptional activation of NF-kappa-B target genes in response to endogenous pro-inflammatory stimuli. The chain is NF-kappa-B inhibitor-like protein 1 (Nfkbil1) from Rattus norvegicus (Rat).